The chain runs to 284 residues: Protein phosphatase 1 regulatory subunit 3B (284 aa).

The short motif at 61–64 (RVSF) is the PP1-binding motif element. Residues 124 to 232 (RNRLQTDHVC…SNKGKNYRII (109 aa)) form the CBM21 domain. Ser-260 bears the Phosphoserine mark.

In terms of assembly, interacts with glycogen, PPP1CC catalytic subunit of PP1 and PYGL. Associates with glycogen particles. Forms complexes with debranching enzyme, glycogen phosphorylase, glycogen synthase and phosphorylase kinase which is necessary for its regulation of PP1 activity.

In terms of biological role, acts as a glycogen-targeting subunit for phosphatase PP1. Facilitates interaction of the PP1 with enzymes of the glycogen metabolism and regulates its activity. Suppresses the rate at which PP1 dephosphorylates (inactivates) glycogen phosphorylase and enhances the rate at which it activates glycogen synthase and therefore limits glycogen breakdown. Its activity is inhibited by PYGL, resulting in inhibition of the glycogen synthase and glycogen phosphorylase phosphatase activities of PP1. Dramatically increases basal and insulin-stimulated glycogen synthesis upon overexpression in hepatocytes. The protein is Protein phosphatase 1 regulatory subunit 3B (PPP1R3B) of Bos taurus (Bovine).